We begin with the raw amino-acid sequence, 335 residues long: Magnesium-protoporphyrin IX monomethyl ester [oxidative] cyclase (335 aa).

Belongs to the AcsF family. Fe cation serves as cofactor.

The protein localises to the plastid. Its subcellular location is the chloroplast. It catalyses the reaction Mg-protoporphyrin IX 13-monomethyl ester + 3 NADPH + 3 O2 + 2 H(+) = 3,8-divinyl protochlorophyllide a + 3 NADP(+) + 5 H2O. The protein operates within porphyrin-containing compound metabolism; chlorophyll biosynthesis (light-independent). Functionally, catalyzes the formation of the isocyclic ring in chlorophyll biosynthesis. Mediates the cyclase reaction, which results in the formation of divinylprotochlorophyllide (Pchlide) characteristic of all chlorophylls from magnesium-protoporphyrin IX 13-monomethyl ester (MgPMME). This is Magnesium-protoporphyrin IX monomethyl ester [oxidative] cyclase from Cyanidioschyzon merolae (strain NIES-3377 / 10D) (Unicellular red alga).